Here is a 389-residue protein sequence, read N- to C-terminus: uncharacterized protein (389 aa).

This is an uncharacterized protein from Treponema pallidum (strain Nichols).